The primary structure comprises 371 residues: Glutamate 5-kinase (371 aa).

Lysine 10 provides a ligand contact to ATP. Residues serine 50, aspartate 137, and asparagine 149 each contribute to the substrate site. ATP-binding positions include 169 to 170 and 208 to 214; these read SD and TGGMFTK. Residues 274–352 form the PUA domain; that stretch reads EGRIYIDDGA…EEIRNILGED (79 aa).

It belongs to the glutamate 5-kinase family.

Its subcellular location is the cytoplasm. The catalysed reaction is L-glutamate + ATP = L-glutamyl 5-phosphate + ADP. The protein operates within amino-acid biosynthesis; L-proline biosynthesis; L-glutamate 5-semialdehyde from L-glutamate: step 1/2. Its function is as follows. Catalyzes the transfer of a phosphate group to glutamate to form L-glutamate 5-phosphate. This is Glutamate 5-kinase from Dictyoglomus turgidum (strain DSM 6724 / Z-1310).